A 503-amino-acid polypeptide reads, in one-letter code: Inosine-5'-monophosphate dehydrogenase 1 (503 aa).

S2 is subject to N-acetylserine. Residues 167–225 (MKSCDSSDYCVPWEIDFEKLEFVLEDKQKGFVVLERDGETVNVVTKDDIQRVKGYPKSG) form the CBS domain. NAD(+)-binding positions include 265-267 (DSS) and 315-317 (GMG). K(+) contacts are provided by G317 and G319. Position 320 (S320) interacts with IMP. C322 provides a ligand contact to K(+). C322 serves as the catalytic Thioimidate intermediate. IMP is bound by residues 355 to 357 (DGG), 378 to 379 (GS), and 402 to 406 (YRGMG). R418 functions as the Proton acceptor in the catalytic mechanism. Q430 contributes to the IMP binding site. Residues E489, G490, and G491 each coordinate K(+).

The protein belongs to the IMPDH/GMPR family. As to quaternary structure, homotetramer. The cofactor is K(+).

Its subcellular location is the cytoplasm. It carries out the reaction IMP + NAD(+) + H2O = XMP + NADH + H(+). It participates in purine metabolism; XMP biosynthesis via de novo pathway; XMP from IMP: step 1/1. With respect to regulation, mycophenolic acid (MPA) is a non-competitive inhibitor that prevents formation of the closed enzyme conformation by binding to the same site as the amobile flap. In contrast, mizoribine monophosphate (MZP) is a competitive inhibitor that induces the closed conformation. MPA is a potent inhibitor of mammalian IMPDHs but a poor inhibitor of the bacterial enzymes. MZP is a more potent inhibitor of bacterial IMPDH. Catalyzes the conversion of inosine 5'-phosphate (IMP) to xanthosine 5'-phosphate (XMP), the first committed and rate-limiting step in the de novo synthesis of guanine nucleotides, and therefore plays an important role in the regulation of cell growth. This is Inosine-5'-monophosphate dehydrogenase 1 from Arabidopsis thaliana (Mouse-ear cress).